The chain runs to 183 residues: Capsid protein (183 aa).

The disordered stretch occupies residues 136–183 (NAPILSTLPETTVVRRRGRSPRRRTPSPRRRRSQSPRRRRSQSPASQC). A compositionally biased stretch (basic residues) spans 149–176 (VRRRGRSPRRRTPSPRRRRSQSPRRRRS). 3 positions are modified to phosphoserine; by host: serine 155, serine 162, and serine 170. Residues 155 to 161 (SPRRRTP) form a 1; half-length repeat. The segment at 155–177 (SPRRRTPSPRRRRSQSPRRRRSQ) is 3 X 8 AA repeats of S-P-R-R-R-[PR]-S-Q. The Bipartite nuclear localization signal motif lies at 158–175 (RRTPSPRRRRSQSPRRRR). 2 repeat units span residues 162–169 (SPRRRRSQ) and 170–177 (SPRRRRSQ). The RNA binding stretch occupies residues 177 to 183 (QSPASQC).

Belongs to the orthohepadnavirus core antigen family. As to quaternary structure, homodimerizes, then multimerizes. Interacts with cytosol exposed regions of viral L glycoprotein present in the reticulum-to-Golgi compartment. Interacts with human FLNB. Phosphorylated form interacts with host importin alpha; this interaction depends on the exposure of the NLS, which itself depends upon genome maturation and/or phosphorylation of the capsid protein. Interacts with host NUP153. Phosphorylated by host SRPK1, SRPK2, and maybe protein kinase C or GAPDH. Phosphorylation is critical for pregenomic RNA packaging. Protein kinase C phosphorylation is stimulated by HBx protein and may play a role in transport of the viral genome to the nucleus at the late step during the viral replication cycle.

The protein localises to the virion. It is found in the host cytoplasm. Functionally, self assembles to form an icosahedral capsid. Most capsids appear to be large particles with an icosahedral symmetry of T=4 and consist of 240 copies of capsid protein, though a fraction forms smaller T=3 particles consisting of 180 capsid proteins. Entering capsids are transported along microtubules to the nucleus. Phosphorylation of the capsid is thought to induce exposure of nuclear localization signal in the C-terminal portion of the capsid protein that allows binding to the nuclear pore complex via the importin (karyopherin-) alpha and beta. Capsids are imported in intact form through the nuclear pore into the nuclear basket, where it probably binds NUP153. Only capsids that contain the mature viral genome can release the viral DNA and capsid protein into the nucleoplasm. Immature capsids get stuck in the basket. Capsids encapsulate the pre-genomic RNA and the P protein. Pre-genomic RNA is reverse-transcribed into DNA while the capsid is still in the cytoplasm. The capsid can then either be directed to the nucleus, providing more genomes for transcription, or bud through the endoplasmic reticulum to provide new virions. The polypeptide is Capsid protein (Hepatitis B virus genotype F2 (isolate Brazil/w4B) (HBV-F)).